We begin with the raw amino-acid sequence, 638 residues long: DNA mismatch repair protein MutL (638 aa).

Residues glycine 398–glutamate 435 are disordered.

This sequence belongs to the DNA mismatch repair MutL/HexB family.

Its function is as follows. This protein is involved in the repair of mismatches in DNA. It is required for dam-dependent methyl-directed DNA mismatch repair. May act as a 'molecular matchmaker', a protein that promotes the formation of a stable complex between two or more DNA-binding proteins in an ATP-dependent manner without itself being part of a final effector complex. The protein is DNA mismatch repair protein MutL of Shewanella baltica (strain OS155 / ATCC BAA-1091).